Reading from the N-terminus, the 181-residue chain is Large ribosomal subunit protein uL5 (181 aa).

Belongs to the universal ribosomal protein uL5 family. In terms of assembly, part of the 50S ribosomal subunit; part of the 5S rRNA/L5/L18/L25 subcomplex. Contacts the 5S rRNA and the P site tRNA. Forms a bridge to the 30S subunit in the 70S ribosome.

This is one of the proteins that bind and probably mediate the attachment of the 5S RNA into the large ribosomal subunit, where it forms part of the central protuberance. In the 70S ribosome it contacts protein S13 of the 30S subunit (bridge B1b), connecting the 2 subunits; this bridge is implicated in subunit movement. Contacts the P site tRNA; the 5S rRNA and some of its associated proteins might help stabilize positioning of ribosome-bound tRNAs. The polypeptide is Large ribosomal subunit protein uL5 (Mesomycoplasma hyopneumoniae (strain 232) (Mycoplasma hyopneumoniae)).